The chain runs to 259 residues: Glutamate racemase (259 aa).

Substrate contacts are provided by residues 7–8 and 39–40; these read DS and YG. Cysteine 70 (proton donor/acceptor) is an active-site residue. 71–72 serves as a coordination point for substrate; sequence NS. Cysteine 180 (proton donor/acceptor) is an active-site residue. 181 to 182 contributes to the substrate binding site; that stretch reads TH.

This sequence belongs to the aspartate/glutamate racemases family.

The catalysed reaction is L-glutamate = D-glutamate. It functions in the pathway cell wall biogenesis; peptidoglycan biosynthesis. In terms of biological role, provides the (R)-glutamate required for cell wall biosynthesis. The protein is Glutamate racemase of Hydrogenobaculum sp. (strain Y04AAS1).